A 147-amino-acid polypeptide reads, in one-letter code: Acireductone dioxygenase (147 aa).

Positions 74, 76, 80, and 119 each coordinate Fe(2+). Positions 74, 76, 80, and 119 each coordinate Ni(2+).

The protein belongs to the acireductone dioxygenase (ARD) family. It depends on Fe(2+) as a cofactor. The cofactor is Ni(2+).

It is found in the cytoplasm. The protein localises to the nucleus. The enzyme catalyses 1,2-dihydroxy-5-(methylsulfanyl)pent-1-en-3-one + O2 = 4-methylsulfanyl-2-oxobutanoate + formate + 2 H(+). The catalysed reaction is 1,2-dihydroxy-5-(methylsulfanyl)pent-1-en-3-one + O2 = 3-(methylsulfanyl)propanoate + CO + formate + 2 H(+). Its pathway is amino-acid biosynthesis; L-methionine biosynthesis via salvage pathway; L-methionine from S-methyl-5-thio-alpha-D-ribose 1-phosphate: step 5/6. Its function is as follows. Catalyzes 2 different reactions between oxygen and the acireductone 1,2-dihydroxy-3-keto-5-methylthiopentene (DHK-MTPene) depending upon the metal bound in the active site. Fe-containing acireductone dioxygenase (Fe-ARD) produces formate and 2-keto-4-methylthiobutyrate (KMTB), the alpha-ketoacid precursor of methionine in the methionine recycle pathway. Ni-containing acireductone dioxygenase (Ni-ARD) produces methylthiopropionate, carbon monoxide and formate, and does not lie on the methionine recycle pathway. In Dictyostelium discoideum (Social amoeba), this protein is Acireductone dioxygenase (adi1).